Consider the following 469-residue polypeptide: Phenylalanine--tRNA ligase alpha subunit (469 aa).

L-phenylalanine contacts are provided by residues Thr-309, 348–350, and Phe-388; that span reads QLD. Residue Glu-390 coordinates Mg(2+).

The protein belongs to the class-II aminoacyl-tRNA synthetase family. Phe-tRNA synthetase alpha subunit type 2 subfamily. In terms of assembly, tetramer of two alpha and two beta subunits. Mg(2+) is required as a cofactor.

Its subcellular location is the cytoplasm. It catalyses the reaction tRNA(Phe) + L-phenylalanine + ATP = L-phenylalanyl-tRNA(Phe) + AMP + diphosphate + H(+). This chain is Phenylalanine--tRNA ligase alpha subunit, found in Sulfurisphaera tokodaii (strain DSM 16993 / JCM 10545 / NBRC 100140 / 7) (Sulfolobus tokodaii).